Consider the following 585-residue polypeptide: Glutamate decarboxylase 2 (585 aa).

Residues 1–25 are disordered; it reads MASPGSGFWSFGSEDGSGDPENPST. Phosphoserine occurs at positions 3, 6, 10, and 13. S-palmitoyl cysteine attachment occurs at residues Cys30 and Cys45. Position 181-183 (181-183) interacts with substrate; the sequence is QLS. An N6-(pyridoxal phosphate)lysine modification is found at Lys396. Residue Arg558 participates in substrate binding.

The protein belongs to the group II decarboxylase family. As to quaternary structure, homodimer. The cofactor is pyridoxal 5'-phosphate. Post-translationally, phosphorylated; which does not affect kinetic parameters or subcellular location. Palmitoylated; which is required for presynaptic clustering.

Its subcellular location is the cytoplasm. It localises to the cytosol. The protein resides in the cytoplasmic vesicle. The protein localises to the presynaptic cell membrane. It is found in the golgi apparatus membrane. It catalyses the reaction L-glutamate + H(+) = 4-aminobutanoate + CO2. Functionally, catalyzes the production of GABA. The polypeptide is Glutamate decarboxylase 2 (GAD2) (Canis lupus familiaris (Dog)).